Reading from the N-terminus, the 643-residue chain is Clathrin interactor 1 (643 aa).

One can recognise an ENTH domain in the interval 16–149 (NVVMNYSEIE…QDDDRLREER (134 aa)). R29 is a binding site for a 1,2-diacyl-sn-glycero-3-phospho-(1D-myo-inositol-4,5-bisphosphate). The interaction with VTI1B stretch occupies residues 52 to 54 (FMY). R67 contacts a 1,2-diacyl-sn-glycero-3-phospho-(1D-myo-inositol-4,5-bisphosphate). Interaction with VTI1B stretches follow at residues 94–96 (SER) and 142–153 (DDRLREERKKAK). S163, S166, S173, S205, S210, S227, S245, and S299 each carry phosphoserine. A disordered region spans residues 219–331 (FRRKDREDSP…SSGDLVDLFD (113 aa)). Residues 222-239 (KDREDSPERCSDSDEEKK) are compositionally biased toward basic and acidic residues. Positions 300–310 (PDQNASTHTPQ) are enriched in polar residues. T308 carries the phosphothreonine modification. Over residues 311–323 (SSLKTSVPSSKSS) the composition is skewed to low complexity. 2 positions are modified to phosphoserine: S312 and S642.

It belongs to the epsin family. In terms of assembly, binds clathrin heavy chain and AP-2. Interacts with VTI1B. Interacts with GGA2 (via GAE domain). Interacts with AP1G1 (via GAE domain). Interacts with AP1G2 (via GAE domain).

Its subcellular location is the cytoplasm. The protein localises to the perinuclear region. It localises to the membrane. The protein resides in the cytoplasmic vesicle. It is found in the clathrin-coated vesicle. In terms of biological role, binds to membranes enriched in phosphatidylinositol 4,5-bisphosphate (PtdIns(4,5)P2). May have a role in transport via clathrin-coated vesicles from the trans-Golgi network to endosomes. Stimulates clathrin assembly. This Bos taurus (Bovine) protein is Clathrin interactor 1 (CLINT1).